A 1434-amino-acid polypeptide reads, in one-letter code: Probable ATP-dependent DNA helicase HFM1 (1434 aa).

A Helicase ATP-binding domain is found at 289–476 (DDLLYTDRNF…WLSDGERPAV (188 aa)). 302 to 309 (APTGSGKT) is a binding site for ATP. Positions 410 to 413 (DEVH) match the DEAH box motif. Positions 514–718 (KVYSVIRTYS…DVNIALDWIR (205 aa)) constitute a Helicase C-terminal domain. Positions 775–1089 (PTEAGRLMAW…VGLDIHQKFT (315 aa)) constitute an SEC63 domain. The interval 1110 to 1130 (TDISHSDYSGRATATGSSKGM) is disordered. A C4-type zinc finger spans residues 1141-1156 (CHHHCKNKHACGHDCC). Positions 1294 to 1333 (GFGDTRDSSLGGSKLPFQKSSSRFQRDNSNSFASSPGKPD) are disordered. Residues 1311–1327 (QKSSSRFQRDNSNSFAS) show a composition bias toward polar residues.

The protein belongs to the helicase family. SKI2 subfamily. It depends on Zn(2+) as a cofactor.

The enzyme catalyses Couples ATP hydrolysis with the unwinding of duplex DNA by translocating in the 3'-5' direction.. It carries out the reaction ATP + H2O = ADP + phosphate + H(+). Required for crossover formation and complete synapsis of homologous chromosomes during meiosis. The protein is Probable ATP-dependent DNA helicase HFM1 of Mus musculus (Mouse).